The sequence spans 118 residues: D-dopachrome decarboxylase (118 aa).

Residue Pro-2 is modified to N-acetylproline. Lys-33 is subject to N6-acetyllysine. Ser-90 is modified (phosphoserine).

This sequence belongs to the MIF family. In terms of assembly, homotrimer.

Its subcellular location is the cytoplasm. The catalysed reaction is D-dopachrome + H(+) = 5,6-dihydroxyindole + CO2. Tautomerization of D-dopachrome with decarboxylation to give 5,6-dihydroxyindole (DHI). This chain is D-dopachrome decarboxylase (Ddt), found in Mus musculus (Mouse).